The following is a 132-amino-acid chain: Myelin P2 protein (132 aa).

Position 2 is an N-acetylserine (S2). (9Z)-octadecenoate-binding positions include R107 and 127-129; that span reads RIY. Residues R107 and 127 to 129 each bind hexadecanoate; that span reads RIY.

This sequence belongs to the calycin superfamily. Fatty-acid binding protein (FABP) family. In terms of assembly, monomer.

The protein resides in the cytoplasm. May play a role in lipid transport protein in Schwann cells. May bind cholesterol. This chain is Myelin P2 protein (Pmp2), found in Mus musculus (Mouse).